The primary structure comprises 356 residues: Protein pelota homolog (356 aa).

This sequence belongs to the eukaryotic release factor 1 family. Pelota subfamily. Monomer. Requires a divalent metal cation as cofactor.

It is found in the cytoplasm. In terms of biological role, may function in recognizing stalled ribosomes, interact with stem-loop structures in stalled mRNA molecules, and effect endonucleolytic cleavage of the mRNA. May play a role in the release non-functional ribosomes and degradation of damaged mRNAs. Has endoribonuclease activity. The chain is Protein pelota homolog from Pyrococcus horikoshii (strain ATCC 700860 / DSM 12428 / JCM 9974 / NBRC 100139 / OT-3).